The sequence spans 448 residues: Trigger factor (448 aa).

The 86-residue stretch at 172–257 (GDRVTVDFVG…MKKVEWPHLP (86 aa)) folds into the PPIase FKBP-type domain.

Belongs to the FKBP-type PPIase family. Tig subfamily.

Its subcellular location is the cytoplasm. The catalysed reaction is [protein]-peptidylproline (omega=180) = [protein]-peptidylproline (omega=0). In terms of biological role, involved in protein export. Acts as a chaperone by maintaining the newly synthesized protein in an open conformation. Functions as a peptidyl-prolyl cis-trans isomerase. The chain is Trigger factor from Burkholderia multivorans (strain ATCC 17616 / 249).